We begin with the raw amino-acid sequence, 101 residues long: CRISPR-associated endoribonuclease Cas2 (101 aa).

Aspartate 8 contributes to the Mg(2+) binding site.

The protein belongs to the CRISPR-associated endoribonuclease Cas2 protein family. As to quaternary structure, homodimer, forms a heterotetramer with a Cas1 homodimer. It depends on Mg(2+) as a cofactor.

In terms of biological role, CRISPR (clustered regularly interspaced short palindromic repeat), is an adaptive immune system that provides protection against mobile genetic elements (viruses, transposable elements and conjugative plasmids). CRISPR clusters contain sequences complementary to antecedent mobile elements and target invading nucleic acids. CRISPR clusters are transcribed and processed into CRISPR RNA (crRNA). Functions as a ssRNA-specific endoribonuclease. Involved in the integration of spacer DNA into the CRISPR cassette. The chain is CRISPR-associated endoribonuclease Cas2 from Lacticaseibacillus rhamnosus (strain ATCC 53103 / LMG 18243 / GG) (Lactobacillus rhamnosus).